Reading from the N-terminus, the 222-residue chain is Peroxisomal membrane protein 11-4 (222 aa).

The Cytoplasmic segment spans residues 1 to 81 (MSAGDTLDKL…LNGLRRAPGE (81 aa)). The helical transmembrane segment at 82–102 (FGALAVLANAGEMVYFFFDHF) threads the bilayer. The Lumenal portion of the chain corresponds to 103–196 (TWLSRVGVLD…IGIADIEPNP (94 aa)). Residues 197–217 (FCNHAVTLGISGLVSAWAGWY) form a helical membrane-spanning segment. At 218–222 (RNWPS) the chain is on the cytoplasmic side.

This sequence belongs to the peroxin-11 family. Expressed in seedlings, shoots, leaf sheaths and flag leaf.

The protein resides in the peroxisome membrane. Its function is as follows. Involved in peroxisomal proliferation. This chain is Peroxisomal membrane protein 11-4 (PEX11-4), found in Oryza sativa subsp. indica (Rice).